We begin with the raw amino-acid sequence, 481 residues long: Aspartyl/glutamyl-tRNA(Asn/Gln) amidotransferase subunit B (481 aa).

Belongs to the GatB/GatE family. GatB subfamily. As to quaternary structure, heterotrimer of A, B and C subunits.

It catalyses the reaction L-glutamyl-tRNA(Gln) + L-glutamine + ATP + H2O = L-glutaminyl-tRNA(Gln) + L-glutamate + ADP + phosphate + H(+). It carries out the reaction L-aspartyl-tRNA(Asn) + L-glutamine + ATP + H2O = L-asparaginyl-tRNA(Asn) + L-glutamate + ADP + phosphate + 2 H(+). In terms of biological role, allows the formation of correctly charged Asn-tRNA(Asn) or Gln-tRNA(Gln) through the transamidation of misacylated Asp-tRNA(Asn) or Glu-tRNA(Gln) in organisms which lack either or both of asparaginyl-tRNA or glutaminyl-tRNA synthetases. The reaction takes place in the presence of glutamine and ATP through an activated phospho-Asp-tRNA(Asn) or phospho-Glu-tRNA(Gln). The chain is Aspartyl/glutamyl-tRNA(Asn/Gln) amidotransferase subunit B from Fusobacterium nucleatum subsp. nucleatum (strain ATCC 25586 / DSM 15643 / BCRC 10681 / CIP 101130 / JCM 8532 / KCTC 2640 / LMG 13131 / VPI 4355).